Consider the following 326-residue polypeptide: tRNA(Ile)-lysidine synthase (326 aa).

25–30 serves as a coordination point for ATP; sequence SGGQDS.

Belongs to the tRNA(Ile)-lysidine synthase family.

It localises to the cytoplasm. The enzyme catalyses cytidine(34) in tRNA(Ile2) + L-lysine + ATP = lysidine(34) in tRNA(Ile2) + AMP + diphosphate + H(+). In terms of biological role, ligates lysine onto the cytidine present at position 34 of the AUA codon-specific tRNA(Ile) that contains the anticodon CAU, in an ATP-dependent manner. Cytidine is converted to lysidine, thus changing the amino acid specificity of the tRNA from methionine to isoleucine. The sequence is that of tRNA(Ile)-lysidine synthase from Prochlorococcus marinus (strain NATL1A).